The following is a 140-amino-acid chain: Nucleoside diphosphate kinase (140 aa).

Residues lysine 11, phenylalanine 59, arginine 87, threonine 93, arginine 104, and asparagine 114 each coordinate ATP. Residue histidine 117 is the Pros-phosphohistidine intermediate of the active site.

It belongs to the NDK family. Homotetramer. Mg(2+) serves as cofactor.

It localises to the cytoplasm. The enzyme catalyses a 2'-deoxyribonucleoside 5'-diphosphate + ATP = a 2'-deoxyribonucleoside 5'-triphosphate + ADP. It carries out the reaction a ribonucleoside 5'-diphosphate + ATP = a ribonucleoside 5'-triphosphate + ADP. Functionally, major role in the synthesis of nucleoside triphosphates other than ATP. The ATP gamma phosphate is transferred to the NDP beta phosphate via a ping-pong mechanism, using a phosphorylated active-site intermediate. The chain is Nucleoside diphosphate kinase from Jannaschia sp. (strain CCS1).